We begin with the raw amino-acid sequence, 392 residues long: Glycerophosphodiester phosphodiesterase GDPD5 (392 aa).

The N-terminal stretch at methionine 1–glycine 21 is a signal peptide. Residues proline 44–glutamine 362 enclose the GP-PDE domain. 4 N-linked (GlcNAc...) asparagine glycosylation sites follow: asparagine 120, asparagine 239, asparagine 260, and asparagine 329.

The protein belongs to the glycerophosphoryl diester phosphodiesterase family. In terms of tissue distribution, expressed in roots, rosette and cauline leaves, stems, flowers and siliques.

The protein localises to the secreted. Its subcellular location is the cell wall. It is found in the vacuole. The catalysed reaction is a sn-glycero-3-phosphodiester + H2O = an alcohol + sn-glycerol 3-phosphate + H(+). This is Glycerophosphodiester phosphodiesterase GDPD5 from Arabidopsis thaliana (Mouse-ear cress).